We begin with the raw amino-acid sequence, 427 residues long: Zinc finger protein 134 (427 aa).

Residue Lys20 forms a Glycyl lysine isopeptide (Lys-Gly) (interchain with G-Cter in SUMO2) linkage. The C2H2-type 1 zinc finger occupies Leu50–His72. The C2H2-type 2; degenerate zinc-finger motif lies at His78–Tyr100. Glycyl lysine isopeptide (Lys-Gly) (interchain with G-Cter in SUMO2) cross-links involve residues Lys135 and Lys139. 9 consecutive C2H2-type zinc fingers follow at residues Tyr176 to His198, Tyr204 to His226, Tyr232 to His254, Tyr260 to His282, Tyr288 to His310, Tyr316 to His338, Phe344 to His366, Phe372 to His394, and Tyr400 to His422.

Belongs to the krueppel C2H2-type zinc-finger protein family.

Its subcellular location is the nucleus. May be involved in transcriptional regulation. The sequence is that of Zinc finger protein 134 (ZNF134) from Homo sapiens (Human).